Here is a 400-residue protein sequence, read N- to C-terminus: Acetate kinase (400 aa).

Asn-9 is a Mg(2+) binding site. Lys-16 provides a ligand contact to ATP. Position 90 (Arg-90) interacts with substrate. The active-site Proton donor/acceptor is the Asp-147. ATP is bound by residues 207–211 (HIGNG), 282–284 (DLR), and 330–334 (GIGEN). Glu-385 serves as a coordination point for Mg(2+).

Belongs to the acetokinase family. Homodimer. It depends on Mg(2+) as a cofactor. The cofactor is Mn(2+).

The protein resides in the cytoplasm. It carries out the reaction acetate + ATP = acetyl phosphate + ADP. Its pathway is metabolic intermediate biosynthesis; acetyl-CoA biosynthesis; acetyl-CoA from acetate: step 1/2. Catalyzes the formation of acetyl phosphate from acetate and ATP. Can also catalyze the reverse reaction. This is Acetate kinase from Staphylococcus aureus (strain Mu3 / ATCC 700698).